The chain runs to 402 residues: Phosphopentomutase (402 aa).

Mn(2+) contacts are provided by Asp10, Asp301, His306, Asp342, His343, and His354.

It belongs to the phosphopentomutase family. Requires Mn(2+) as cofactor.

Its subcellular location is the cytoplasm. The catalysed reaction is 2-deoxy-alpha-D-ribose 1-phosphate = 2-deoxy-D-ribose 5-phosphate. It catalyses the reaction alpha-D-ribose 1-phosphate = D-ribose 5-phosphate. The protein operates within carbohydrate degradation; 2-deoxy-D-ribose 1-phosphate degradation; D-glyceraldehyde 3-phosphate and acetaldehyde from 2-deoxy-alpha-D-ribose 1-phosphate: step 1/2. Functionally, isomerase that catalyzes the conversion of deoxy-ribose 1-phosphate (dRib-1-P) and ribose 1-phosphate (Rib-1-P) to deoxy-ribose 5-phosphate (dRib-5-P) and ribose 5-phosphate (Rib-5-P), respectively. This chain is Phosphopentomutase, found in Aeromonas salmonicida (strain A449).